A 20-amino-acid chain; its full sequence is Thrombin-like enzyme okinaxobin-2 (20 aa).

The Peptidase S1 domain maps to valine 1–tyrosine 20.

The protein belongs to the peptidase S1 family. Snake venom subfamily. Monomer. In terms of processing, glycosylated. Expressed by the venom gland.

The protein resides in the secreted. With respect to regulation, strongly inactivated by diisopropylfluorophosphate (DFP) and to a lesser extent by tosyl-L-lysine chloromethyl ketone (TLCK). Its function is as follows. Thrombin-like snake venom serine protease. Releases both fibrinopeptides A and B from fibrinogen (FGA and FGB) to form fibrin clots. The polypeptide is Thrombin-like enzyme okinaxobin-2 (Ovophis okinavensis (Ryukyu Island pit viper)).